The sequence spans 350 residues: Holliday junction branch migration complex subunit RuvB (350 aa).

The tract at residues 1–22 is disordered; it reads MDHTASLSPVRPEAQPTDDRER. Residues 1–185 form a large ATPase domain (RuvB-L) region; sequence MDHTASLSPV…FGIVERFEFY (185 aa). ATP-binding positions include Leu-24, Arg-25, Gly-66, Lys-69, Thr-70, Thr-71, 132–134, Arg-175, Tyr-185, and Arg-222; that span reads EDY. Thr-70 contacts Mg(2+). Positions 186-256 are small ATPAse domain (RuvB-S); sequence TPEELAAIVQ…IVRAGLAHLK (71 aa). Residues 259–350 are head domain (RuvB-H); sequence ELGLELHDIQ…PHSPEQGTLL (92 aa). DNA contacts are provided by Arg-314 and Arg-319.

Belongs to the RuvB family. In terms of assembly, homohexamer. Forms an RuvA(8)-RuvB(12)-Holliday junction (HJ) complex. HJ DNA is sandwiched between 2 RuvA tetramers; dsDNA enters through RuvA and exits via RuvB. An RuvB hexamer assembles on each DNA strand where it exits the tetramer. Each RuvB hexamer is contacted by two RuvA subunits (via domain III) on 2 adjacent RuvB subunits; this complex drives branch migration. In the full resolvosome a probable DNA-RuvA(4)-RuvB(12)-RuvC(2) complex forms which resolves the HJ.

Its subcellular location is the cytoplasm. It carries out the reaction ATP + H2O = ADP + phosphate + H(+). Functionally, the RuvA-RuvB-RuvC complex processes Holliday junction (HJ) DNA during genetic recombination and DNA repair, while the RuvA-RuvB complex plays an important role in the rescue of blocked DNA replication forks via replication fork reversal (RFR). RuvA specifically binds to HJ cruciform DNA, conferring on it an open structure. The RuvB hexamer acts as an ATP-dependent pump, pulling dsDNA into and through the RuvAB complex. RuvB forms 2 homohexamers on either side of HJ DNA bound by 1 or 2 RuvA tetramers; 4 subunits per hexamer contact DNA at a time. Coordinated motions by a converter formed by DNA-disengaged RuvB subunits stimulates ATP hydrolysis and nucleotide exchange. Immobilization of the converter enables RuvB to convert the ATP-contained energy into a lever motion, pulling 2 nucleotides of DNA out of the RuvA tetramer per ATP hydrolyzed, thus driving DNA branch migration. The RuvB motors rotate together with the DNA substrate, which together with the progressing nucleotide cycle form the mechanistic basis for DNA recombination by continuous HJ branch migration. Branch migration allows RuvC to scan DNA until it finds its consensus sequence, where it cleaves and resolves cruciform DNA. The sequence is that of Holliday junction branch migration complex subunit RuvB from Treponema pallidum (strain Nichols).